The sequence spans 366 residues: MSKLRVAIIFGGKSTEHQVSLQSAKNIINELDRTKFDLCLIGINEQGQWHEYAEDNYLINSDNPSTISLSQPLRPVAIIPGSTRQQFISLTDGQPLAQIDVVFPIVHGAYGEDGTLQGLLHMIDMPYVGPNIMSSAACMDKDITKRLLDDAGLAVAPFITLMAHQLNDISYNEVVEQLGLPLFIKPANLGSSVGISKVNNEAEFNAALSMAFEYDLKVIIESAIVGREIECAVLGNEEPEVSPCGEIVLNDAFYAYNTKYIDDDGAKVVVPADLDNAISLHIRQTALKAYQVLNCLGMSRVDVFLTEDNQVIINEINTLPGFTNISMYPKLWQSTGLDYQSLITKLIELALEHHKKTAVLKTKCEL.

In terms of domain architecture, ATP-grasp spans 145-348 (KRLLDDAGLA…YQSLITKLIE (204 aa)). 175–230 (VEQLGLPLFIKPANLGSSVGISKVNNEAEFNAALSMAFEYDLKVIIESAIVGREIE) contacts ATP. 3 residues coordinate Mg(2+): aspartate 302, glutamate 315, and asparagine 317.

This sequence belongs to the D-alanine--D-alanine ligase family. Mg(2+) is required as a cofactor. Requires Mn(2+) as cofactor.

The protein localises to the cytoplasm. It carries out the reaction 2 D-alanine + ATP = D-alanyl-D-alanine + ADP + phosphate + H(+). Its pathway is cell wall biogenesis; peptidoglycan biosynthesis. Functionally, cell wall formation. This chain is D-alanine--D-alanine ligase, found in Proteus mirabilis (strain HI4320).